The following is a 373-amino-acid chain: Deoxyguanosinetriphosphate triphosphohydrolase-like protein 1 (373 aa).

The segment at 21–43 (RSSEARRAVPEAPSETRTAYQKD) is disordered. The HD domain occupies 76–198 (RLTHTLEVQQ…VDAADALAYT (123 aa)).

The protein belongs to the dGTPase family. Type 2 subfamily.

This is Deoxyguanosinetriphosphate triphosphohydrolase-like protein 1 from Deinococcus radiodurans (strain ATCC 13939 / DSM 20539 / JCM 16871 / CCUG 27074 / LMG 4051 / NBRC 15346 / NCIMB 9279 / VKM B-1422 / R1).